The following is a 125-amino-acid chain: Glycine cleavage system H protein (125 aa).

In terms of domain architecture, Lipoyl-binding spans 23–105; that stretch reads VSTVGITEHA…FEGGWLFKVR (83 aa). K64 carries the post-translational modification N6-lipoyllysine.

This sequence belongs to the GcvH family. As to quaternary structure, the glycine cleavage system is composed of four proteins: P, T, L and H. Requires (R)-lipoate as cofactor.

Its function is as follows. The glycine cleavage system catalyzes the degradation of glycine. The H protein shuttles the methylamine group of glycine from the P protein to the T protein. This is Glycine cleavage system H protein from Streptomyces avermitilis (strain ATCC 31267 / DSM 46492 / JCM 5070 / NBRC 14893 / NCIMB 12804 / NRRL 8165 / MA-4680).